A 199-amino-acid chain; its full sequence is Early nodulin-like protein 3 (199 aa).

Residues 1-23 (MGLVMRFDLYLMFVMLMGLGFTI) form the signal peptide. The region spanning 27 to 128 (YKFYVGGKDG…GQKLAVKVLS (102 aa)) is the Phytocyanin domain. N-linked (GlcNAc...) asparagine glycans are attached at residues N57 and N83. C82 and C116 are oxidised to a cystine. The segment at 130-180 (VHHSHSPRHTSPSPSPVHQELSSPGPSPGVEPSSDSNSRVPAPGPATAPNS) is disordered. Over residues 138 to 165 (HTSPSPSPVHQELSSPGPSPGVEPSSDS) the composition is skewed to low complexity. N179 is lipidated: GPI-anchor amidated asparagine. The propeptide at 180–199 (SAGLVGPGMVVLVIMISSLF) is removed in mature form.

This sequence belongs to the early nodulin-like (ENODL) family. As to expression, confined to flowers.

It is found in the cell membrane. May act as a carbohydrate transporter. The sequence is that of Early nodulin-like protein 3 from Arabidopsis thaliana (Mouse-ear cress).